We begin with the raw amino-acid sequence, 4004 residues long: Hybrid PKS-NRPS synthetase mpsA (4004 aa).

One can recognise a Ketosynthase family 3 (KS3) domain in the interval 5–438 (NEPIAVIGSA…GANAHAILES (434 aa)). Active-site for beta-ketoacyl synthase activity residues include Cys-178, His-317, and His-358. In terms of domain architecture, Malonyl-CoA:ACP transacylase (MAT) spans 544–867 (VFTGQGAQWP…RGGDDVNAFS (324 aa)). An N-terminal hotdog fold region spans residues 933-1066 (HPILGVKSIE…GTISITLGIP (134 aa)). The segment at 933–1233 (HPILGVKSIE…SMVPFSNATA (301 aa)) is dehydratase (DH) domain. Residues 933-1234 (HPILGVKSIE…MVPFSNATAE (302 aa)) form the PKS/mFAS DH domain. His-966 functions as the Proton acceptor; for dehydratase activity in the catalytic mechanism. The C-terminal hotdog fold stretch occupies residues 1081–1234 (MVDVEVDRFY…MVPFSNATAE (154 aa)). Asp-1141 (proton donor; for dehydratase activity) is an active-site residue. The segment at 1289–1575 (EEEEQTLIHY…DTYAPNFDSL (287 aa)) is methyltransferase (MT) domain. Residues 2102–2272 (TYFMVGLSGE…RRGLAASILG (171 aa)) form the Ketoreductase (KR) domain. One can recognise a Carrier 1 domain in the interval 2384-2462 (EVVEIMQAGF…DLLNDALDRL (79 aa)). Ser-2422 bears the O-(pantetheine 4'-phosphoryl)serine mark. The interval 2471–2540 (GADPSSVSRP…ERRAAELARK (70 aa)) is disordered. The span at 2488–2500 (PSVSRPASNAPPV) shows a compositional bias: low complexity. Positions 2514–2540 (LKAEREREAEAKRKREEERRAAELARK) are enriched in basic and acidic residues. The interval 2584–3019 (PMSFGQSRFW…RQCAERPGRE (436 aa)) is condensation (C) domain. An adenylation (A) (KR) domain region spans residues 3060-3459 (KRHTASLAIK…GRIEGDTQIK (400 aa)). One can recognise a Carrier 2 domain in the interval 3570–3647 (ANLTPTESRL…GMARAIDDAT (78 aa)). The residue at position 3607 (Ser-3607) is an O-(pantetheine 4'-phosphoryl)serine. The tract at residues 3694–3924 (LTIVLTGATG…VVEGVAQALF (231 aa)) is reductase (RED) domain.

This sequence in the C-terminal section; belongs to the NRP synthetase family. The cofactor is pantetheine 4'-phosphate.

The protein operates within secondary metabolite biosynthesis. Its function is as follows. Hybrid PKS-NRPS synthetase; part of the gene cluster that mediates the biosynthesis of macrophasetins, 3-decalinoyltetramic acids (DTAs) which feature a tetramate (pyrrolidine-2,4-dione) unit connected to a decalin fragment and that have potent bioactivities. The PKS-NRPS mpsA together with its associated enoylreductase partner mpsG incorporate one unit of acetyl-CoA, seven units of malonyl-CoA, and one unit of L-alanine to assemble the linear tetramic acid intermediate corresponding to the backbone of macrophasetins. Without the Diels-Alderase mpsD, the mpsA/G product can undergo the non-enzymatic intramolecular Diels-Alder (IMDA) reaction to generate both macrophasetin A and macrophasetin B. Catalyzed by mpsD, the linear tetramic acid intermediate is thoroughly converted to macrophasetin A via the endo-IMDA reaction in a regioselective and stereoselective manner. Finally, the cytochrome P450 monooxygenase mpsF catalyzes the hydroxylation at C20 to yield the end product macrophasetin C. The polypeptide is Hybrid PKS-NRPS synthetase mpsA (Macrophomina phaseolina (strain MS6) (Charcoal rot fungus)).